Consider the following 291-residue polypeptide: Ribosomal RNA small subunit methyltransferase A (291 aa).

His37, Leu39, Gly64, Glu85, Asp110, and Asn131 together coordinate S-adenosyl-L-methionine.

It belongs to the class I-like SAM-binding methyltransferase superfamily. rRNA adenine N(6)-methyltransferase family. RsmA subfamily.

It is found in the cytoplasm. The catalysed reaction is adenosine(1518)/adenosine(1519) in 16S rRNA + 4 S-adenosyl-L-methionine = N(6)-dimethyladenosine(1518)/N(6)-dimethyladenosine(1519) in 16S rRNA + 4 S-adenosyl-L-homocysteine + 4 H(+). Functionally, specifically dimethylates two adjacent adenosines (A1518 and A1519) in the loop of a conserved hairpin near the 3'-end of 16S rRNA in the 30S particle. May play a critical role in biogenesis of 30S subunits. The chain is Ribosomal RNA small subunit methyltransferase A from Dehalococcoides mccartyi (strain ATCC BAA-2266 / KCTC 15142 / 195) (Dehalococcoides ethenogenes (strain 195)).